The chain runs to 977 residues: Receptor protein-tyrosine kinase CEPR2 (977 aa).

An N-terminal signal peptide occupies residues M1–S31. The Extracellular segment spans residues T32–G620. N-linked (GlcNAc...) asparagine glycosylation occurs at N85. LRR repeat units follow at residues L97–C121, K122–S146, E148–N167, M168–G192, L193–L217, A219–L241, V242–L265, T266–V288, K290–D312, L313–S338, L340–N361, K363–C385, K386–L409, L411–S433, T434–L457, T458–L481, K482–N504, V506–I529, A530–L553, and L555–V576. N128 is a glycosylation site (N-linked (GlcNAc...) asparagine). Residue N205 is glycosylated (N-linked (GlcNAc...) asparagine). N243, N251, and N264 each carry an N-linked (GlcNAc...) asparagine glycan. Residues N301 and N325 are each glycosylated (N-linked (GlcNAc...) asparagine). 2 N-linked (GlcNAc...) asparagine glycosylation sites follow: N469 and N491. A glycan (N-linked (GlcNAc...) asparagine) is linked at N615. Residues T621 to L641 form a helical membrane-spanning segment. Residues R642–V977 lie on the Cytoplasmic side of the membrane. A Protein kinase domain is found at L683 to V965. Residues I689–V697 and K712 each bind ATP. Phosphotyrosine is present on Y801. Residue D814 is the Proton acceptor of the active site. A Phosphoserine modification is found at S846. Phosphotyrosine is present on residues Y854 and Y861.

The protein belongs to the protein kinase superfamily. Ser/Thr protein kinase family. In terms of assembly, interacts with the root-derived peptide CEP1. Binds to the ammonium transporter AMT1-1. Expressed in mature leaves, primary roots, and the root tips of both primary and lateral roots.

The protein resides in the cell membrane. It carries out the reaction L-tyrosyl-[protein] + ATP = O-phospho-L-tyrosyl-[protein] + ADP + H(+). Functionally, receptor kinase involved in the perception of C-terminally encoded plant signaling peptide (CEP) and subsequent regulation of root and shoot development. Together with CEPR1, mediates systemic nitrogen (N)-demand signaling upon the perception of root-derived peptides (e.g. CEP1) via the up-regulation of genes involved in N uptake and assimilation pathways. This chain is Receptor protein-tyrosine kinase CEPR2, found in Arabidopsis thaliana (Mouse-ear cress).